The chain runs to 584 residues: HERV-H_2q24.3 provirus ancestral Env polyprotein (584 aa).

The signal sequence occupies residues 1-35 (MIFAGKAPSNTSTLMKFYSLLLYSLLFSFPFLCHP). Residues 36–523 (LPLPSYLHHT…WALSNWMSWV (488 aa)) are Extracellular-facing. A glycan (N-linked (GlcNAc...) asparagine) is linked at Asn-47. Residues 64 to 67 (CWLC) carry the CXXC motif. Asn-199, Asn-222, Asn-265, Asn-283, Asn-352, and Asn-370 each carry an N-linked (GlcNAc...) asparagine glycan. A fusion peptide region spans residues 388-408 (VIPLIPLMVGLGLSASTVALG). The CKS-17 signature appears at 454 to 470 (LQNRRGLDLLTAEKGGL). A disulfide bond links Cys-471 and Cys-478. Positions 471–479 (CIFLNEECC) match the CX6CC motif. Residue Asn-483 is glycosylated (N-linked (GlcNAc...) asparagine). The helical transmembrane segment at 524–544 (LPIVSPLIPIFLLLLFGPCIF) threads the bilayer. The Cytoplasmic segment spans residues 545–584 (RLVSQFIQNRIQAITNHSIRQMFLLTSPQYHPLPQDLPSA).

It belongs to the gamma type-C retroviral envelope protein family. HERV class-I H env subfamily. The surface (SU) and transmembrane (TM) proteins form a heterodimer. SU and TM are attached by noncovalent interactions or by a labile interchain disulfide bond. Specific enzymatic cleavages in vivo yield the mature SU and TM proteins. Post-translationally, the CXXC motif is highly conserved across a broad range of retroviral envelope proteins. It is thought to participate in the formation of a labile disulfide bond possibly with the CX6CC motif present in the transmembrane protein. Isomerization of the intersubunit disulfide bond to an SU intrachain disulfide bond is thought to occur upon receptor recognition in order to allow membrane fusion. Low expression in skin and testis. No expression in several cell lines.

The protein resides in the virion. It is found in the cell membrane. Functionally, retroviral envelope proteins mediate receptor recognition and membrane fusion during early infection. Endogenous envelope proteins may have kept, lost or modified their original function during evolution. This endogenous envelope protein has lost its original fusogenic properties but has immunosuppressive properties in vivo. Its function is as follows. SU mediates receptor recognition. TM anchors the envelope heterodimer to the viral membrane through one transmembrane domain. The other hydrophobic domain, called fusion peptide, mediates fusion of the viral membrane with the target cell membrane. In Homo sapiens (Human), this protein is HERV-H_2q24.3 provirus ancestral Env polyprotein.